The following is a 160-amino-acid chain: Secreted RxLR effector protein RXLR-C11 (160 aa).

A signal peptide spans 1-19 (MHFSLVLLVFAAIVIPICA). The RxLR-dEER signature appears at 58–75 (RLLRMNDKAVISDHEEER).

It belongs to the RxLR effector family.

Its subcellular location is the secreted. It is found in the host cell membrane. The protein resides in the host nucleus. In terms of biological role, secreted effector that suppresses pattern-triggered immunity (PTI) in plant host. The polypeptide is Secreted RxLR effector protein RXLR-C11 (Plasmopara halstedii (Downy mildew of sunflower)).